The primary structure comprises 297 residues: Protoheme IX farnesyltransferase (297 aa).

9 helical membrane-spanning segments follow: residues 23–43 (VTQL…PGMP), 49–69 (VFGT…NCLI), 93–113 (IQVL…LYHL), 117–137 (LTMW…TVIL), 144–164 (NIVI…AAVA), 171–191 (AWVL…ALAL), 215–235 (RLHI…PYAI), 238–258 (SGAL…WYAW), and 275–295 (FSIL…WVGL).

This sequence belongs to the UbiA prenyltransferase family. Protoheme IX farnesyltransferase subfamily.

Its subcellular location is the cell inner membrane. It catalyses the reaction heme b + (2E,6E)-farnesyl diphosphate + H2O = Fe(II)-heme o + diphosphate. Its pathway is porphyrin-containing compound metabolism; heme O biosynthesis; heme O from protoheme: step 1/1. Functionally, converts heme B (protoheme IX) to heme O by substitution of the vinyl group on carbon 2 of heme B porphyrin ring with a hydroxyethyl farnesyl side group. The polypeptide is Protoheme IX farnesyltransferase (Bordetella pertussis (strain Tohama I / ATCC BAA-589 / NCTC 13251)).